The following is a 361-amino-acid chain: uncharacterized protein (361 aa).

6 WD repeats span residues 57 to 96 (RHKK…VSSK), 103 to 142 (KEIS…GIIH), 146 to 184 (DHID…KPIL), 187 to 229 (EQDE…DHTD), 237 to 275 (SHDF…YERI), and 280 to 318 (SSRS…GDES). Residues 311–361 (DQKEGDESSSSDNLDSDEDSSSDSEFSSPKKKKKVGNQGKKPLGTDFFDGL) form a disordered region.

It is found in the nucleus. It localises to the nucleolus. This is an uncharacterized protein from Schizosaccharomyces pombe (strain 972 / ATCC 24843) (Fission yeast).